Here is a 364-residue protein sequence, read N- to C-terminus: RNA-binding protein 48 (364 aa).

In terms of domain architecture, RRM spans 51 to 129; the sequence is RYLLVQGVPA…GQLHVCYAPE (79 aa). Polar residues predominate over residues 157 to 174; sequence LHSQQAEVNTESSSSTDT. Disordered regions lie at residues 157–191, 239–291, and 343–364; these read LHSQ…EARR, SLHN…ESRK, and ASVP…RRRI. Residues 247-262 show a composition bias toward low complexity; the sequence is VQKTSTQSESSSSSGV.

It belongs to the RBM48 family. Component of the minor spliceosome, which splices U12-type introns.

Its function is as follows. As a component of the minor spliceosome, involved in the splicing of U12-type introns in pre-mRNAs. The chain is RNA-binding protein 48 (rbm48) from Danio rerio (Zebrafish).